We begin with the raw amino-acid sequence, 343 residues long: 4-hydroxythreonine-4-phosphate dehydrogenase (343 aa).

Residues histidine 141 and threonine 142 each contribute to the substrate site. Residues histidine 175, histidine 220, and histidine 275 each coordinate a divalent metal cation. 3 residues coordinate substrate: lysine 283, asparagine 292, and arginine 301.

Belongs to the PdxA family. In terms of assembly, homodimer. Requires Zn(2+) as cofactor. Mg(2+) serves as cofactor. Co(2+) is required as a cofactor.

The protein localises to the cytoplasm. It carries out the reaction 4-(phosphooxy)-L-threonine + NAD(+) = 3-amino-2-oxopropyl phosphate + CO2 + NADH. The protein operates within cofactor biosynthesis; pyridoxine 5'-phosphate biosynthesis; pyridoxine 5'-phosphate from D-erythrose 4-phosphate: step 4/5. In terms of biological role, catalyzes the NAD(P)-dependent oxidation of 4-(phosphooxy)-L-threonine (HTP) into 2-amino-3-oxo-4-(phosphooxy)butyric acid which spontaneously decarboxylates to form 3-amino-2-oxopropyl phosphate (AHAP). The protein is 4-hydroxythreonine-4-phosphate dehydrogenase of Janthinobacterium sp. (strain Marseille) (Minibacterium massiliensis).